Consider the following 442-residue polypeptide: MEDPIKIIHKYKNNNGRIQYHINIFIGDIVDENCMRILRKIKNLDLYTSLTSLETREIDILEKNYGEYWYEKFFNSYHINNTKELTLKNSVRMRELRSLYTEEWVNRHFVNYKKRLETTIFNYEYVVKEDRERRSVKRHIRRQQDDVEELLDYRTTGHPLPPALNDEQYVMSRIESSVETDNWCADNLLEEQLTESELNRELKKLVSKQNLDYSTDKPEDSESEDIELEDSESEDSESEDIDQHGGQGPDDDEFNANFDDPQFDEFDFGNTEDEQNVKLFEMEVEQDLEDVDLLFNDIDETDKNSKLTTREIKEAISNEQYDRIGKKIVDFDESRDNSMFDENLKDVITKTYITNQYLFKDDTIKTIRDKICCGFKNSNKFGENTYIIPSHQYLWSEYTYQGKIDRVMIGQKWIIRNDILKLDVEPNTNTSVKKNSGEIYVF.

Positions L211–G269 are disordered. The span at S221–D240 shows a compositional bias: acidic residues.

It is found in the virion. This is an uncharacterized protein from Acanthamoeba polyphaga (Amoeba).